The primary structure comprises 186 residues: CASP-like protein 7 (186 aa).

Residues 1–26 (MKGGSIEAGEVSKDASPRKGVARGLS) are Cytoplasmic-facing. A helical membrane pass occupies residues 27–47 (IMDFILRIIAAVATLGSALAM). Residues 48-72 (GTTNETLPFATQFIKFRAEFDDLPS) are Extracellular-facing. Asparagine 51 is a glycosylation site (N-linked (GlcNAc...) asparagine). The helical transmembrane segment at 73–93 (LVFFVMANAVVCGYLVLSLMI) threads the bilayer. The Cytoplasmic portion of the chain corresponds to 94 to 107 (SVFHILRSTPVKSR). The helical transmembrane segment at 108–128 (ILLVALDTVMLSLVTASASAA) threads the bilayer. The Extracellular segment spans residues 129–162 (TSIVYIAHNGNTGANWFAICQQYNNFCERISGSL). Residues 163–183 (IGSYIAVALFIILIMLSLVAI) form a helical membrane-spanning segment. The Cytoplasmic segment spans residues 184–186 (SRN).

The protein belongs to the Casparian strip membrane proteins (CASP) family. As to quaternary structure, homodimer and heterodimers.

Its subcellular location is the cell membrane. Its function is as follows. Regulates membrane-cell wall junctions and localized cell wall deposition. Required for establishment of the Casparian strip membrane domain (CSD) and the subsequent formation of Casparian strips, a cell wall modification of the root endodermis that determines an apoplastic barrier between the intraorganismal apoplasm and the extraorganismal apoplasm and prevents lateral diffusion. The protein is CASP-like protein 7 of Glycine max (Soybean).